The following is an 89-amino-acid chain: Class I hydrophobin D (89 aa).

Positions Met-1–Ala-16 are cleaved as a signal peptide. Disulfide bonds link Cys-28–Cys-68, Cys-39–Cys-60, Cys-40–Cys-52, and Cys-69–Cys-85. N-linked (GlcNAc...) asparagine glycosylation is present at Asn-36.

The protein belongs to the fungal hydrophobin family.

It is found in the secreted. Its subcellular location is the cell wall. The protein localises to the vacuole. It localises to the cytoplasmic vesicle. Its function is as follows. Aerial growth, conidiation, and dispersal of filamentous fungi in the environment rely upon a capability of their secreting small amphipathic proteins called hydrophobins (HPBs) with low sequence identity. Class I can self-assemble into an outermost layer of rodlet bundles on aerial cell surfaces, conferring cellular hydrophobicity that supports fungal growth, development and dispersal; whereas Class II form highly ordered films at water-air interfaces through intermolecular interactions but contribute nothing to the rodlet structure. Hyd1D contributes to certain cell wall-related features, such as hydrophobicity but is not involved in cell wall-related events during fungal proliferation in host hemocoel. Does not contribute to conidial hydrophobicity. Involved in insect hemocoel colonization independent of cell hydrophobicity. This is Class I hydrophobin D from Beauveria bassiana (strain ARSEF 2860) (White muscardine disease fungus).